The chain runs to 403 residues: Prostaglandin D2 receptor 2 (403 aa).

The Extracellular segment spans residues 1–34; sequence MANITLKPLCPLLEEMVQLPNHSNSSLRYIDHVS. N-linked (GlcNAc...) asparagine glycosylation is found at Asn3, Asn21, and Asn24. The helical transmembrane segment at 35 to 55 threads the bilayer; sequence VLLHGLASLLGLVENGLILFV. Residues 56-71 lie on the Cytoplasmic side of the membrane; that stretch reads VGCRMRQTVVTTWVLH. Residues 72–92 traverse the membrane as a helical segment; the sequence is LALSDLLAAASLPFFTYFLAV. Over 93 to 104 the chain is Extracellular; sequence GHSWELGTTFCK. A disulfide bridge connects residues Cys103 and Cys198. A helical transmembrane segment spans residues 105–125; that stretch reads LHSSVFFLNMFASGFLLSAIS. Residues 126 to 147 are Cytoplasmic-facing; that stretch reads LDRCLQVVRPVWAQNHRTVAAA. A helical membrane pass occupies residues 148–168; sequence HRVCLMLWALAVLNTVPYFVF. The Extracellular segment spans residues 169–209; the sequence is RDTIPRRDGRIMCYYNMLLLNPGSDRDTTCDYRQKALAVSK. Residues 210–230 traverse the membrane as a helical segment; that stretch reads FLLAFMVPLAIIASSHVAVSL. The Cytoplasmic portion of the chain corresponds to 231 to 245; it reads QLHHRGRQRTGRFVR. The helical transmembrane segment at 246–266 threads the bilayer; that stretch reads LVAAIVVAFILCWGPYHIFSL. Topologically, residues 267-284 are extracellular; the sequence is LEARAHSVTTLRQLASRG. A helical membrane pass occupies residues 285 to 305; it reads LPFVTSLAFFNSVVNPLLYVL. Over 306–403 the chain is Cytoplasmic; sequence TCPDMLHKLR…KQGSLSCTLD (98 aa). Residues 329–332 carry the Involved in the recycling of CRTH2 motif; that stretch reads DSDL. At Ser330 the chain carries Phosphoserine. Disordered regions lie at residues 332–353 and 384–403; these read LSTG…STTT and PRRV…CTLD. Positions 338–348 are enriched in basic residues; the sequence is KRCRRRHRRRA. Residue Ser349 is modified to Phosphoserine. Positions 393–403 are enriched in polar residues; it reads EKQGSLSCTLD.

Belongs to the G-protein coupled receptor 1 family. In terms of processing, phosphorylated.

The protein resides in the cell membrane. Receptor for prostaglandin D2 (PGD2). Coupled to the G(i)-protein. Receptor activation may result in pertussis toxin-sensitive decreases in cAMP levels and Ca(2+) mobilization. PI3K signaling is also implicated in mediating PTGDR2 effects. PGD2 induced receptor internalization. CRTH2 internalization can be regulated by diverse kinases such as, PKC, PKA, GRK2, GPRK5/GRK5 and GRK6. Receptor activation is responsible, at least in part, in immune regulation and allergic/inflammation responses. This chain is Prostaglandin D2 receptor 2 (Ptgdr2), found in Rattus norvegicus (Rat).